Consider the following 228-residue polypeptide: Urease accessory protein UreF (228 aa).

It belongs to the UreF family. In terms of assembly, ureD, UreF and UreG form a complex that acts as a GTP-hydrolysis-dependent molecular chaperone, activating the urease apoprotein by helping to assemble the nickel containing metallocenter of UreC. The UreE protein probably delivers the nickel.

Its subcellular location is the cytoplasm. Functionally, required for maturation of urease via the functional incorporation of the urease nickel metallocenter. This chain is Urease accessory protein UreF, found in Prochlorococcus marinus (strain MIT 9301).